The chain runs to 197 residues: Imidazoleglycerol-phosphate dehydratase (197 aa).

This sequence belongs to the imidazoleglycerol-phosphate dehydratase family.

Its subcellular location is the cytoplasm. The enzyme catalyses D-erythro-1-(imidazol-4-yl)glycerol 3-phosphate = 3-(imidazol-4-yl)-2-oxopropyl phosphate + H2O. Its pathway is amino-acid biosynthesis; L-histidine biosynthesis; L-histidine from 5-phospho-alpha-D-ribose 1-diphosphate: step 6/9. This is Imidazoleglycerol-phosphate dehydratase from Alkalilimnicola ehrlichii (strain ATCC BAA-1101 / DSM 17681 / MLHE-1).